The following is a 472-amino-acid chain: MENFKHLPEPFRIRVIEPVKRTTREYREKAILNAGMNPFLLDSEDVFIDLLTDSGTGAITQEMQAAMFRGDEAYSGSRSYHALARAVKDIFGYEYTIPTHQGRGAEQIYIPVLIKKREKEKGLDRSKMVALSNYFFDTTQGHTQINCCVAKNVYTEEAFDTGVKADFKGNFDLEKLEQAILEAGPANVPYIVSTITCNSAGGQPVSIANLKAVYEIAQRYDIPVIMDSARFAENAYFIQQRERDYRNWSIEEITREAYKYADGLAMSAKKDAMVQMGGLLCFKDESFFDVYTECRTLCVVQEGFPTYGGLEGGAMERLAVGLYDGMRQDWLAYRINQVEYLVNGLEAIGVICQQAGGHAAFVDAGKLLPHIPADQFPAHALACELYKVAGIRAVEIGSLLLGRDPATGKQHPCPAELLRLTIPRATYTQTHMDFIIEAFEKVKANARNVKGLEFTYEPPVLRHFTARLKEKA.

Lys-270 carries the N6-(pyridoxal phosphate)lysine modification.

The protein belongs to the beta-eliminating lyase family. In terms of assembly, homotetramer. Pyridoxal 5'-phosphate is required as a cofactor.

The catalysed reaction is L-tryptophan + H2O = indole + pyruvate + NH4(+). The protein operates within amino-acid degradation; L-tryptophan degradation via pyruvate pathway; indole and pyruvate from L-tryptophan: step 1/1. The chain is Tryptophanase (tnaA) from Vibrio cholerae serotype O1 (strain ATCC 39315 / El Tor Inaba N16961).